Here is a 605-residue protein sequence, read N- to C-terminus: Aspartate--tRNA(Asp/Asn) ligase (605 aa).

An L-aspartate-binding site is contributed by Glu-186. Residues Gln-210–Lys-213 are aspartate. L-aspartate is bound by residues Arg-232 and His-460. Residue Arg-232–Glu-234 coordinates ATP. Residue Glu-494 coordinates ATP. Arg-501 serves as a coordination point for L-aspartate. An ATP-binding site is contributed by Gly-546–Arg-549.

It belongs to the class-II aminoacyl-tRNA synthetase family. Type 1 subfamily. As to quaternary structure, homodimer.

Its subcellular location is the cytoplasm. The enzyme catalyses tRNA(Asx) + L-aspartate + ATP = L-aspartyl-tRNA(Asx) + AMP + diphosphate. In terms of biological role, aspartyl-tRNA synthetase with relaxed tRNA specificity since it is able to aspartylate not only its cognate tRNA(Asp) but also tRNA(Asn). Reaction proceeds in two steps: L-aspartate is first activated by ATP to form Asp-AMP and then transferred to the acceptor end of tRNA(Asp/Asn). This Chlorobium chlorochromatii (strain CaD3) protein is Aspartate--tRNA(Asp/Asn) ligase.